Consider the following 679-residue polypeptide: Stress-70 protein, mitochondrial (679 aa).

The N-terminal 46 residues, 1–46 (MISATRAAAARLVGTAASRTPAAARHQDGWNGLSHEAFRFVSRRDY), are a transit peptide targeting the mitochondrion. Residues 1 to 432 (MISATRAAAA…IQGGVLAGDV (432 aa)) are interaction with NFS1. Residues Thr63 and Asn64 each contribute to the ADP site. Residues 63-431 (TNSCVAVMEG…AIQGGVLAGD (369 aa)) form a nucleotide-binding domain (NBD) region. Lys76 is modified (N6-acetyllysine). Position 87 is a phosphothreonine (Thr87). Residues Lys135 and Lys138 each carry the N6-acetyllysine; alternate modification. Lys135 and Lys138 each carry N6-succinyllysine; alternate. Lys143 bears the N6-acetyllysine mark. Position 206 is an N6-acetyllysine; alternate (Lys206). Position 206 is an N6-succinyllysine; alternate (Lys206). N6-malonyllysine; alternate is present on Lys206. Residues Lys234 and Lys288 each carry the N6-acetyllysine modification. The residue at position 300 (Lys300) is an N6-acetyllysine; alternate. At Lys300 the chain carries N6-succinyllysine; alternate. Positions 313, 316, and 320 each coordinate ADP. Position 360 is an N6-acetyllysine; alternate (Lys360). At Lys360 the chain carries N6-succinyllysine; alternate. Lys368 carries the post-translational modification N6-succinyllysine. Gly388 and Arg391 together coordinate ADP. Position 394 is an N6-succinyllysine (Lys394). Ser408 bears the Phosphoserine mark. An interdomain linker region spans residues 432 to 441 (VTDVLLLDVT). The segment at 432–679 (VTDVLLLDVT…QKEDQKEEKQ (248 aa)) is interaction with FXN and ISCU. A substrate-binding domain (SBD) region spans residues 442–679 (PLSLGIETLG…QKEDQKEEKQ (238 aa)). Arg513 carries the post-translational modification Omega-N-methylarginine. 2 positions are modified to N6-acetyllysine; alternate: Lys567 and Lys600. Lys567 and Lys600 each carry N6-succinyllysine; alternate. The residue at position 610 (Lys610) is an N6-succinyllysine. Lys612 bears the N6-acetyllysine mark. At Lys646 the chain carries N6-acetyllysine; alternate. Residue Lys646 is modified to N6-succinyllysine; alternate. The disordered stretch occupies residues 656-679 (ASEREGSGSSGTGEQKEDQKEEKQ). Over residues 669–679 (EQKEDQKEEKQ) the composition is skewed to basic and acidic residues.

Belongs to the heat shock protein 70 family. As to quaternary structure, interacts strongly with the intermediate form of FXN and weakly with its mature form. Interacts with HSCB. Associates with the mitochondrial contact site and cristae organizing system (MICOS) complex, composed of at least MICOS10/MIC10, CHCHD3/MIC19, CHCHD6/MIC25, APOOL/MIC27, IMMT/MIC60, APOO/MIC23/MIC26 and QIL1/MIC13. This complex was also known under the names MINOS or MitOS complex. The MICOS complex associates with mitochondrial outer membrane proteins SAMM50, MTX1, MTX2 and DNAJC11, mitochondrial inner membrane protein TMEM11 and with HSPA9. Interacts with DNLZ, the interaction is required to prevent self-aggregation. Interacts with TESPA1. Interacts with PDPN. Interacts with NFU1, NFS1 and ISCU. Interacts with TP53; the interaction promotes TP53 degradation. Interacts (via SBD domain) with UBXN2A; the interaction with UBXN2A inhibits HSPA9/MOT-2 interaction with and degradation of TP53, thereby promotes TP53 translocation to the nucleus. Interacts with ITPR1 AND VDAC1; this interaction couples ITPR1 to VDAC1. Component of the TIM23 mitochondrial inner membrane pre-sequence translocase complex.

It localises to the mitochondrion. Its subcellular location is the nucleus. It is found in the nucleolus. The protein resides in the cytoplasm. The protein localises to the mitochondrion matrix. The enzyme catalyses ATP + H2O = ADP + phosphate + H(+). The chaperone activity is regulated by ATP-induced allosteric coupling of the nucleotide-binding (NBD) and substrate-binding (SBD) domains. ATP binding in the NBD leads to a conformational change in the NBD, which is transferred through the interdomain linker (IDL) to the substrate-binding domain (SBD). This elicits a reduced substrate affinity and a faster substrate exchange rate. Upon hydrolysis of ATP to ADP, the protein undergoes a conformational change that increases its affinity for substrate proteins. It cycles through repeated phases of ATP hydrolysis and nucleotide exchange, facilitating repeated cycles of substrate binding and release. Functions in collaboration with co-chaperones. Functions with the co-chaperone, DNLZ, to maintain solubility and regulate ATP hydrolysis. Nucleotide exchange factors, GRPEL1 and GRPEL2, accelerate nucleotide exchange. Functionally, mitochondrial chaperone that plays a key role in mitochondrial protein import, folding, and assembly. Plays an essential role in the protein quality control system, the correct folding of proteins, the re-folding of misfolded proteins, and the targeting of proteins for subsequent degradation. These processes are achieved through cycles of ATP binding, ATP hydrolysis, and ADP release, mediated by co-chaperones. In mitochondria, it associates with the TIM (translocase of the inner membrane) protein complex to assist in the import and folding of mitochondrial proteins. Plays an important role in mitochondrial iron-sulfur cluster (ISC) biogenesis, interacts with and stabilizes ISC cluster assembly proteins FXN, NFU1, NFS1 and ISCU. Regulates erythropoiesis via stabilization of ISC assembly. Regulates mitochondrial calcium-dependent apoptosis by coupling two calcium channels, ITPR1 and VDAC1, at the mitochondria-associated endoplasmic reticulum (ER) membrane to facilitate calcium transport from the ER lumen to the mitochondria intermembrane space, providing calcium for the downstream calcium channel MCU, which releases it into the mitochondrial matrix. Although primarily located in the mitochondria, it is also found in other cellular compartments. In the cytosol, it associates with proteins involved in signaling, apoptosis, or senescence. It may play a role in cell cycle regulation via its interaction with and promotion of degradation of TP53. May play a role in the control of cell proliferation and cellular aging. Protects against reactive oxygen species (ROS). Extracellular HSPA9 plays a cytoprotective role by preventing cell lysis following immune attack by the membrane attack complex by disrupting formation of the complex. The chain is Stress-70 protein, mitochondrial from Cricetulus griseus (Chinese hamster).